We begin with the raw amino-acid sequence, 142 residues long: HTH-type transcriptional regulator MntR (142 aa).

Residues 1–63 (MPTPSMEDYI…YEKYRGLILT (63 aa)) form the HTH dtxR-type domain. D8, E11, H77, E99, E102, and H103 together coordinate Mn(2+).

The protein belongs to the DtxR/MntR family. In terms of assembly, homodimer.

Its subcellular location is the cytoplasm. With respect to regulation, DNA binding is strongly activated by Mn(2+). Central regulator of manganese homeostasis. This is HTH-type transcriptional regulator MntR from Listeria innocua serovar 6a (strain ATCC BAA-680 / CLIP 11262).